We begin with the raw amino-acid sequence, 258 residues long: L-aspartate dehydrogenase 1 (258 aa).

NAD(+)-binding residues include Ala-121 and Asn-181. His-211 is a catalytic residue.

The protein belongs to the L-aspartate dehydrogenase family.

The catalysed reaction is L-aspartate + NADP(+) + H2O = oxaloacetate + NH4(+) + NADPH + H(+). The enzyme catalyses L-aspartate + NAD(+) + H2O = oxaloacetate + NH4(+) + NADH + H(+). It functions in the pathway cofactor biosynthesis; NAD(+) biosynthesis; iminoaspartate from L-aspartate (dehydrogenase route): step 1/1. Specifically catalyzes the NAD or NADP-dependent dehydrogenation of L-aspartate to iminoaspartate. This Bordetella bronchiseptica (strain ATCC BAA-588 / NCTC 13252 / RB50) (Alcaligenes bronchisepticus) protein is L-aspartate dehydrogenase 1.